The sequence spans 477 residues: Adenosylhomocysteinase (477 aa).

Substrate contacts are provided by threonine 63, aspartate 142, and glutamate 202. Residue 203-205 (TTT) coordinates NAD(+). The substrate site is built by lysine 232 and aspartate 236. NAD(+) contacts are provided by residues asparagine 237, 266–271 (GYGDVG), glutamate 289, asparagine 324, 345–347 (IGH), and asparagine 390.

Belongs to the adenosylhomocysteinase family. The cofactor is NAD(+).

It localises to the cytoplasm. It catalyses the reaction S-adenosyl-L-homocysteine + H2O = L-homocysteine + adenosine. It participates in amino-acid biosynthesis; L-homocysteine biosynthesis; L-homocysteine from S-adenosyl-L-homocysteine: step 1/1. May play a key role in the regulation of the intracellular concentration of adenosylhomocysteine. The chain is Adenosylhomocysteinase from Methylibium petroleiphilum (strain ATCC BAA-1232 / LMG 22953 / PM1).